The primary structure comprises 542 residues: Chaperonin GroEL (542 aa).

Residues 29–32, 86–90, Gly-413, 477–479, and Asp-493 each bind ATP; these read TIGP, DGTTT, and NAA.

It belongs to the chaperonin (HSP60) family. As to quaternary structure, forms a cylinder of 14 subunits composed of two heptameric rings stacked back-to-back. Interacts with the co-chaperonin GroES.

The protein resides in the cytoplasm. It carries out the reaction ATP + H2O + a folded polypeptide = ADP + phosphate + an unfolded polypeptide.. Its function is as follows. Together with its co-chaperonin GroES, plays an essential role in assisting protein folding. The GroEL-GroES system forms a nano-cage that allows encapsulation of the non-native substrate proteins and provides a physical environment optimized to promote and accelerate protein folding. This is Chaperonin GroEL from Lactobacillus acidophilus (strain ATCC 700396 / NCK56 / N2 / NCFM).